Consider the following 136-residue polypeptide: NHL-repeat-containing protein 4 (136 aa).

NHL repeat units follow at residues 48–91 (QPLG…FPRV) and 93–132 (PPICLQLEGLKRPLGMACAPQGQLVVADAGDNCIKLYQYL).

The chain is NHL-repeat-containing protein 4 (Nhlrc4) from Mus musculus (Mouse).